Reading from the N-terminus, the 262-residue chain is pFDCC methylesterase MES16 (262 aa).

The active-site Acyl-ester intermediate is the S87. Residues D211 and H239 each act as charge relay system in the active site.

The protein belongs to the AB hydrolase superfamily. Methylesterase family.

It localises to the cytoplasm. It carries out the reaction methyl (indol-3-yl)acetate + H2O = (indol-3-yl)acetate + methanol + H(+). The catalysed reaction is methyl (-)-jasmonate + H2O = jasmonate + methanol + H(+). The enzyme catalyses primary fluorescent dioxobilin-type chlorophyll catabolite + H2O = O13(4)-desmethyl pFDCC + methanol + H(+). It functions in the pathway plant hormone biosynthesis. The protein operates within lipid metabolism; oxylipin biosynthesis. It participates in porphyrin-containing compound metabolism; chlorophyll degradation. In terms of biological role, involved in the chlorophyll breakdown by its action in fluorescent chlorophyll catabolites (FCCs) demethylation. Demethylates the C13(2)-carboxymethyl group present at the isocyclic ring of chlorophyll. Uses primary fluorescent dioxobilin-type chlorophyll catabolite (pFDCC) as substrate to produce O13(4)-desmethyl pFDCC. Also able to catalyze pheophorbides in vitro. Methylesterase shown to have carboxylesterase activity, methyl indole-3-acetic acid (MeIAA) esterase activity and methyl jasmonate (MeJA) esterase activity in vitro. This chain is pFDCC methylesterase MES16, found in Arabidopsis thaliana (Mouse-ear cress).